The primary structure comprises 354 residues: Vascular endothelial growth factor D (354 aa).

The first 21 residues, 1 to 21 (MYREWVVVNVFMMLYVQLVQG), serve as a signal peptide directing secretion. A propeptide spans 22–88 (SSNEHGPVKR…SRSASHRSTR (67 aa)) (or 99 (in a minor form)). 3 disulfide bridges follow: cysteine 111/cysteine 153, cysteine 142/cysteine 189, and cysteine 146/cysteine 191. Residues asparagine 155 and asparagine 185 are each glycosylated (N-linked (GlcNAc...) asparagine). Positions 206 to 354 (SIQIPEEDRC…AQGPHSRKNP (149 aa)) are excised as a propeptide. The stretch at 222-237 (CPIDMLWDSNKCKCVL) is one 1; approximate repeat. Residues 222–318 (CPIDMLWDSN…PDTCSCEDRC (97 aa)) are 4 X 16 AA repeats of C-X(10)-C-X-C-X(1,3)-C. 3 repeat units span residues 258–273 (CGPH…ECVC), 277–293 (CPKD…CFEC), and 301–318 (CQKH…EDRC). Asparagine 287 is a glycosylation site (N-linked (GlcNAc...) asparagine).

The protein belongs to the PDGF/VEGF growth factor family. As to quaternary structure, homodimer; non-covalent and antiparallel. Undergoes a complex proteolytic maturation which generates a variety of processed secreted forms with increased activity toward VEGFR-3 and VEGFR-2. VEGF-D first form an antiparallel homodimer linked by disulfide bonds before secretion. The fully processed VEGF-D is composed mostly of two VEGF homology domains (VHDs) bound by non-covalent interactions. As to expression, highly expressed in lung, heart, small intestine and fetal lung, and at lower levels in skeletal muscle, colon, and pancreas.

Its subcellular location is the secreted. In terms of biological role, growth factor active in angiogenesis, lymphangiogenesis and endothelial cell growth, stimulating their proliferation and migration and also has effects on the permeability of blood vessels. May function in the formation of the venous and lymphatic vascular systems during embryogenesis, and also in the maintenance of differentiated lymphatic endothelium in adults. Binds and activates VEGFR-2 (KDR/FLK1) and VEGFR-3 (FLT4) receptors. This chain is Vascular endothelial growth factor D, found in Homo sapiens (Human).